A 150-amino-acid polypeptide reads, in one-letter code: D-aminoacyl-tRNA deacylase (150 aa).

The Gly-cisPro motif, important for rejection of L-amino acids motif lies at 138–139; sequence GP.

The protein belongs to the DTD family. Homodimer.

Its subcellular location is the cytoplasm. The enzyme catalyses glycyl-tRNA(Ala) + H2O = tRNA(Ala) + glycine + H(+). It catalyses the reaction a D-aminoacyl-tRNA + H2O = a tRNA + a D-alpha-amino acid + H(+). In terms of biological role, an aminoacyl-tRNA editing enzyme that deacylates mischarged D-aminoacyl-tRNAs. Also deacylates mischarged glycyl-tRNA(Ala), protecting cells against glycine mischarging by AlaRS. Acts via tRNA-based rather than protein-based catalysis; rejects L-amino acids rather than detecting D-amino acids in the active site. By recycling D-aminoacyl-tRNA to D-amino acids and free tRNA molecules, this enzyme counteracts the toxicity associated with the formation of D-aminoacyl-tRNA entities in vivo and helps enforce protein L-homochirality. The protein is D-aminoacyl-tRNA deacylase of Petrotoga mobilis (strain DSM 10674 / SJ95).